The chain runs to 374 residues: DNA/RNA-binding protein ALBA4 (374 aa).

This sequence belongs to the histone-like Alba family.

It localises to the cytoplasm. It is found in the cell cortex. The protein resides in the perinuclear region. Its function is as follows. Possesses DNA- and RNA-binding activities. Binds to DNA with relaxed sequence specificity. May associate with the subtelomeric TARE6 repeats. Regulates the abundance of transcript sub-populations in a stage-specific manner. Regulates activation of male gametocytes. Participates in the coordination of sporozoite development in the oocyst. This is DNA/RNA-binding protein ALBA4 from Plasmodium yoelii yoelii.